A 121-amino-acid polypeptide reads, in one-letter code: Type II secretion system protein I (121 aa).

The propeptide at methionine 1 to glycine 6 is leader sequence. Methionine 7 is subject to N-methylmethionine. Residues methionine 7–leucine 27 form a helical membrane-spanning segment.

It belongs to the GSP I family. Type II secretion is composed of four main components: the outer membrane complex, the inner membrane complex, the cytoplasmic secretion ATPase and the periplasm-spanning pseudopilus. Interacts with core component OutG. Cleaved by prepilin peptidase. Post-translationally, methylated by prepilin peptidase at the amino group of the N-terminal methionine once the leader sequence is cleaved by prepilin peptidase.

It localises to the cell inner membrane. Component of the type II secretion system required for the energy-dependent secretion of extracellular factors such as proteases and toxins from the periplasm. Part of the pseudopilus tip complex that is critical for the recognition and binding of secretion substrates. In Pectobacterium carotovorum subsp. carotovorum (Erwinia carotovora subsp. carotovora), this protein is Type II secretion system protein I (outI).